The sequence spans 794 residues: DNA ligase (794 aa).

The disordered stretch occupies residues 1–47 (MEEDLFSLAAGKQPSQQATNETAPRAGEARENAGTDHPGNAEDPAHR). Positions 13–22 (QPSQQATNET) are enriched in polar residues. Residues 27–47 (GEARENAGTDHPGNAEDPAHR) are compositionally biased toward basic and acidic residues. Residues 73-77 (DAEYD), 122-123 (SI), and Glu-160 each bind NAD(+). The N6-AMP-lysine intermediate role is filled by Lys-162. NAD(+) contacts are provided by Arg-183, Glu-219, Lys-335, and Lys-359. The Zn(2+) site is built by Cys-457, Cys-460, Cys-475, and Cys-480. In terms of domain architecture, BRCT spans 717 to 794 (IPAGSLSGKT…EEDFYKMIGN (78 aa)).

This sequence belongs to the NAD-dependent DNA ligase family. LigA subfamily. Mg(2+) serves as cofactor. It depends on Mn(2+) as a cofactor.

The catalysed reaction is NAD(+) + (deoxyribonucleotide)n-3'-hydroxyl + 5'-phospho-(deoxyribonucleotide)m = (deoxyribonucleotide)n+m + AMP + beta-nicotinamide D-nucleotide.. DNA ligase that catalyzes the formation of phosphodiester linkages between 5'-phosphoryl and 3'-hydroxyl groups in double-stranded DNA using NAD as a coenzyme and as the energy source for the reaction. It is essential for DNA replication and repair of damaged DNA. The protein is DNA ligase of Akkermansia muciniphila (strain ATCC BAA-835 / DSM 22959 / JCM 33894 / BCRC 81048 / CCUG 64013 / CIP 107961 / Muc).